Reading from the N-terminus, the 1220-residue chain is Putative cell agglutination protein SPAPB2C8.01 (1220 aa).

The N-terminal stretch at 1-21 is a signal peptide; that stretch reads MAVSRLLILICLYSFVTFAYP. N-linked (GlcNAc...) asparagine glycans are attached at residues asparagine 44, asparagine 72, asparagine 131, and asparagine 160. 24 consecutive repeat copies span residues 110-145, 146-181, 182-217, 218-253, 254-289, 290-325, 326-361, 362-397, 398-433, 434-469, 470-505, 506-541, 542-577, 578-613, 614-649, 650-685, 686-721, 722-757, 758-793, 794-829, 830-865, 866-901, 902-937, and 938-973. Residues 110–973 form a 24 X 36 AA approximate tandem repeats region; the sequence is NTITTTLYSG…GTVEVILPAP (864 aa). N-linked (GlcNAc...) asparagine glycosylation is present at asparagine 232. Asparagine 304 carries N-linked (GlcNAc...) asparagine glycosylation. The N-linked (GlcNAc...) asparagine glycan is linked to asparagine 376. N-linked (GlcNAc...) asparagine glycosylation is present at asparagine 448. An N-linked (GlcNAc...) asparagine glycan is attached at asparagine 520. Asparagine 592 carries N-linked (GlcNAc...) asparagine glycosylation. The PA14 domain maps to 1039-1202; that stretch reads FTQPAYFGSS…YAATSYAYTA (164 aa).

The protein belongs to the mam3/map4 family.

Its subcellular location is the cell surface. Functionally, may be involved in agglutination during conjugation or other aspects of colony formation. This is Putative cell agglutination protein SPAPB2C8.01 from Schizosaccharomyces pombe (strain 972 / ATCC 24843) (Fission yeast).